Here is a 394-residue protein sequence, read N- to C-terminus: Elongation factor Tu 2 (394 aa).

One can recognise a tr-type G domain in the interval Lys10–Ala204. The G1 stretch occupies residues Gly19 to Thr26. Residue Gly19–Thr26 coordinates GTP. Thr26 is a Mg(2+) binding site. The tract at residues Gly60–Asn64 is G2. The tract at residues Asp81 to Gly84 is G3. Residues Asp81–His85 and Asn136–Asp139 each bind GTP. Residues Asn136–Asp139 form a G4 region. The segment at Ser174–Leu176 is G5.

The protein belongs to the TRAFAC class translation factor GTPase superfamily. Classic translation factor GTPase family. EF-Tu/EF-1A subfamily. As to quaternary structure, monomer.

The protein localises to the cytoplasm. It carries out the reaction GTP + H2O = GDP + phosphate + H(+). Functionally, GTP hydrolase that promotes the GTP-dependent binding of aminoacyl-tRNA to the A-site of ribosomes during protein biosynthesis. In Shewanella frigidimarina (strain NCIMB 400), this protein is Elongation factor Tu 2.